The following is a 260-amino-acid chain: MEGGSITPGEDKPEIQSPIPPNQIFILSGQSNMAGRGGVFKDHHNNRWVWDKILPPECAPNSSILRLSADLRWEEAHEPLHVDIDTGKVCGVGPGMAFANAVKNRLETDSAVIGLVPCASGGTAIKEWERGSHLYERMVKRTEESRKCGGEIKAVLWYQGESDVLDIHDAESYGNNMDRLIKNLRHDLNLPSLPIIQVAIASGGGYIDKVREAQLGLKLSNVVCVDAKGLPLKSDNLHLTTEAQVQLGLSLAQAYLSNFC.

The tract at residues 1-22 (MEGGSITPGEDKPEIQSPIPPN) is disordered. Active-site residues include serine 31, aspartate 235, and histidine 238.

Belongs to the carbohydrate esterase 6 family.

This Arabidopsis thaliana (Mouse-ear cress) protein is Probable carbohydrate esterase At4g34215.